A 203-amino-acid chain; its full sequence is Thymidylate kinase (203 aa).

14-21 provides a ligand contact to ATP; sequence GGEGIGKS.

Belongs to the thymidylate kinase family.

The enzyme catalyses dTMP + ATP = dTDP + ADP. Its function is as follows. Phosphorylation of dTMP to form dTDP in both de novo and salvage pathways of dTTP synthesis. This chain is Thymidylate kinase, found in Rickettsia africae (strain ESF-5).